Consider the following 286-residue polypeptide: Phosphatidylserine decarboxylase proenzyme (286 aa).

Residues Asp88, His145, and Ser251 each act as charge relay system; for autoendoproteolytic cleavage activity in the active site. The Schiff-base intermediate with substrate; via pyruvic acid; for decarboxylase activity role is filled by Ser251. Ser251 bears the Pyruvic acid (Ser); by autocatalysis mark.

This sequence belongs to the phosphatidylserine decarboxylase family. PSD-B subfamily. Prokaryotic type I sub-subfamily. Heterodimer of a large membrane-associated beta subunit and a small pyruvoyl-containing alpha subunit. Requires pyruvate as cofactor. Is synthesized initially as an inactive proenzyme. Formation of the active enzyme involves a self-maturation process in which the active site pyruvoyl group is generated from an internal serine residue via an autocatalytic post-translational modification. Two non-identical subunits are generated from the proenzyme in this reaction, and the pyruvate is formed at the N-terminus of the alpha chain, which is derived from the carboxyl end of the proenzyme. The autoendoproteolytic cleavage occurs by a canonical serine protease mechanism, in which the side chain hydroxyl group of the serine supplies its oxygen atom to form the C-terminus of the beta chain, while the remainder of the serine residue undergoes an oxidative deamination to produce ammonia and the pyruvoyl prosthetic group on the alpha chain. During this reaction, the Ser that is part of the protease active site of the proenzyme becomes the pyruvoyl prosthetic group, which constitutes an essential element of the active site of the mature decarboxylase.

It localises to the cell membrane. The enzyme catalyses a 1,2-diacyl-sn-glycero-3-phospho-L-serine + H(+) = a 1,2-diacyl-sn-glycero-3-phosphoethanolamine + CO2. Its pathway is phospholipid metabolism; phosphatidylethanolamine biosynthesis; phosphatidylethanolamine from CDP-diacylglycerol: step 2/2. Catalyzes the formation of phosphatidylethanolamine (PtdEtn) from phosphatidylserine (PtdSer). The sequence is that of Phosphatidylserine decarboxylase proenzyme from Verminephrobacter eiseniae (strain EF01-2).